Consider the following 77-residue polypeptide: SS18-like protein 2 (77 aa).

Positions 50–53 (YQHV) match the SH2-binding motif.

This sequence belongs to the SS18 family.

This is SS18-like protein 2 (SS18L2) from Homo sapiens (Human).